The chain runs to 397 residues: MKKITILGSTGSIGKNTLKIISNNLDKFSVYSLVAYGNNINVLISQCIKYKPNYVCIMNKKKLLDLKQGLLKNKCKTSVLFGSNDICNLSSSKEVDIVISATVGLSGIFFLFSAIKSGKKILLANKEILVSCGHFFMKQVEKYKSIIIPIDSEHNAIFQSLPLDFQKKLGIASINKYGIYKLILTGSGGPFRNVELRDLKKVSPDQACNHPNWKMGKKISIDSATMMNKGFEYIVAKWLFNVCKDQIELIIHHQSIIHSMIRYIDGTVIANMSLPDMQSSISYGLGYPKRIKIKNKYLDFYKNNKLTFESIDYNRYPCLNLAIQASYNGQGATTVLNSANEISVSAFLSKKIYFTDIAIINKKVLDKLDIFEPSSIEEILLLDSKARNLAKKFIKCY.

The NADPH site is built by threonine 10, glycine 11, serine 12, isoleucine 13, asparagine 39, and asparagine 125. Lysine 126 is a 1-deoxy-D-xylulose 5-phosphate binding site. Glutamate 127 is an NADPH binding site. Aspartate 151 contributes to the Mn(2+) binding site. 4 residues coordinate 1-deoxy-D-xylulose 5-phosphate: serine 152, glutamate 153, serine 187, and histidine 210. Glutamate 153 lines the Mn(2+) pocket. Glycine 216 lines the NADPH pocket. Positions 223, 228, 229, and 232 each coordinate 1-deoxy-D-xylulose 5-phosphate. Glutamate 232 is a binding site for Mn(2+).

This sequence belongs to the DXR family. Homodimer. It depends on Mg(2+) as a cofactor. Mn(2+) is required as a cofactor.

It catalyses the reaction 2-C-methyl-D-erythritol 4-phosphate + NADP(+) = 1-deoxy-D-xylulose 5-phosphate + NADPH + H(+). It participates in isoprenoid biosynthesis; isopentenyl diphosphate biosynthesis via DXP pathway; isopentenyl diphosphate from 1-deoxy-D-xylulose 5-phosphate: step 1/6. Its function is as follows. Catalyzes the NADPH-dependent rearrangement and reduction of 1-deoxy-D-xylulose-5-phosphate (DXP) to 2-C-methyl-D-erythritol 4-phosphate (MEP). This Wigglesworthia glossinidia brevipalpis protein is 1-deoxy-D-xylulose 5-phosphate reductoisomerase.